We begin with the raw amino-acid sequence, 225 residues long: UPF0758 protein BPP1850 (225 aa).

The MPN domain occupies alanine 103–leucine 225. Zn(2+) contacts are provided by histidine 174, histidine 176, and aspartate 187. A JAMM motif motif is present at residues histidine 174 to aspartate 187.

It belongs to the UPF0758 family.

In Bordetella parapertussis (strain 12822 / ATCC BAA-587 / NCTC 13253), this protein is UPF0758 protein BPP1850.